We begin with the raw amino-acid sequence, 378 residues long: Transmembrane 6 superfamily member 2 (378 aa).

9 helical membrane passes run 34–54 (LCVVLTSALVLGLLFMAVYSL), 63–83 (PLYAVFVVFSFTSVVDLVIAL), 110–130 (IFICYWDGTVHYLLYLTMAGA), 140–160 (LGLYWLGSFAMSLLVFLPGNI), 170–190 (PTFFLAILYMLVPCWAGMRIF), 219–239 (LTLIVYLILAAFFTVFRGLVV), 269–289 (MLMYLFYALPFYCLAAYALTF), 291–311 (GCSWLPDWALVFAGAIGQAQF), and 332–352 (TWATFLLSNLLFALGPHLLAL). 2 EXPERA domains span residues 61 to 186 (YDPL…CWAG) and 217 to 351 (ADLT…HLLA).

This sequence belongs to the TM6SF family.

The protein resides in the endoplasmic reticulum membrane. It is found in the endoplasmic reticulum-Golgi intermediate compartment membrane. Functionally, regulator of liver fat metabolism influencing triglyceride secretion and hepatic lipid droplet content. May function as sterol isomerase. This is Transmembrane 6 superfamily member 2 (Tm6sf2) from Rattus norvegicus (Rat).